The primary structure comprises 606 residues: Probable potassium transport system protein Kup (606 aa).

A run of 12 helical transmembrane segments spans residues 18-38, 46-66, 97-117, 138-158, 166-186, 212-232, 247-267, 287-307, 339-359, 368-388, 395-415, and 418-438; these read GLVF…VFAL, VFGI…AEYA, LTFV…DGVI, GLHQ…LFVF, VAGA…LSGA, GLAG…GEAL, AWYI…AFII, LYIP…QAMI, IYIG…MLVF, AYGL…ILIL, WKAV…TACL, and LPHG…TILV.

The protein belongs to the HAK/KUP transporter (TC 2.A.72) family.

The protein localises to the cell inner membrane. It catalyses the reaction K(+)(in) + H(+)(in) = K(+)(out) + H(+)(out). Its function is as follows. Transport of potassium into the cell. Likely operates as a K(+):H(+) symporter. In Trichlorobacter lovleyi (strain ATCC BAA-1151 / DSM 17278 / SZ) (Geobacter lovleyi), this protein is Probable potassium transport system protein Kup.